Here is a 281-residue protein sequence, read N- to C-terminus: Bifunctional protein FolD (281 aa).

Residues Gly-164 to Ser-166, Ser-189, and Ile-230 contribute to the NADP(+) site.

This sequence belongs to the tetrahydrofolate dehydrogenase/cyclohydrolase family. As to quaternary structure, homodimer.

It carries out the reaction (6R)-5,10-methylene-5,6,7,8-tetrahydrofolate + NADP(+) = (6R)-5,10-methenyltetrahydrofolate + NADPH. The enzyme catalyses (6R)-5,10-methenyltetrahydrofolate + H2O = (6R)-10-formyltetrahydrofolate + H(+). Its pathway is one-carbon metabolism; tetrahydrofolate interconversion. Functionally, catalyzes the oxidation of 5,10-methylenetetrahydrofolate to 5,10-methenyltetrahydrofolate and then the hydrolysis of 5,10-methenyltetrahydrofolate to 10-formyltetrahydrofolate. The sequence is that of Bifunctional protein FolD from Pelagibacter ubique (strain HTCC1062).